We begin with the raw amino-acid sequence, 156 residues long: Calglandulin (156 aa).

4 EF-hand domains span residues 8–43, 44–79, 82–117, and 118–153; these read EQITEYKGIFEMFDEEGNGLVKTDDLESLMSLVGIN, PTKRDLANMAKDVDKDKKGTFNCDGFLALMGIYHEK, NQDEELRAAFKVFDKEHKGYIEWDTLKYVLMNAGEP, and LNEQEAELMMKEADKDGDGTIDYEEFVAMMTGESFK. Residues aspartate 131, aspartate 133, aspartate 135, threonine 137, and glutamate 142 each contribute to the Ca(2+) site.

This sequence belongs to the calmodulin family. Calglandulin subfamily. As to expression, expressed by the venom gland.

It is found in the cytoplasm. May be involved in the cellular control mechanism of the secretion of toxins from the gland into the venom. In Bothrops insularis (Golden lancehead), this protein is Calglandulin.